The sequence spans 149 residues: Urease accessory protein UreE (149 aa).

It belongs to the UreE family.

The protein localises to the cytoplasm. Its function is as follows. Involved in urease metallocenter assembly. Binds nickel. Probably functions as a nickel donor during metallocenter assembly. In Synechococcus sp. (strain JA-3-3Ab) (Cyanobacteria bacterium Yellowstone A-Prime), this protein is Urease accessory protein UreE.